Reading from the N-terminus, the 158-residue chain is MQGRLSAWLVKRGLIHRSLGFDYQGIETLQIKPKDWHSIAVILYVYGYNYLRSQCAYDVAPGGLLASVYHLTRIEYGGDQPEEVCIKVFASRRNPRIPSVFWVWKSVDFQERESYDMLGISYDNHPRLKRILMPESWIGWPLRKDYIAPNFYEIQDAH.

The protein belongs to the complex I 30 kDa subunit family. NDH is composed of at least 16 different subunits, 5 of which are encoded in the nucleus.

The protein localises to the plastid. The protein resides in the chloroplast thylakoid membrane. The enzyme catalyses a plastoquinone + NADH + (n+1) H(+)(in) = a plastoquinol + NAD(+) + n H(+)(out). The catalysed reaction is a plastoquinone + NADPH + (n+1) H(+)(in) = a plastoquinol + NADP(+) + n H(+)(out). Its function is as follows. NDH shuttles electrons from NAD(P)H:plastoquinone, via FMN and iron-sulfur (Fe-S) centers, to quinones in the photosynthetic chain and possibly in a chloroplast respiratory chain. The immediate electron acceptor for the enzyme in this species is believed to be plastoquinone. Couples the redox reaction to proton translocation, and thus conserves the redox energy in a proton gradient. This is NAD(P)H-quinone oxidoreductase subunit J, chloroplastic from Jasminum nudiflorum (Winter jasmine).